The sequence spans 138 residues: Nucleoside diphosphate kinase (138 aa).

Residues Lys-9, Phe-57, Arg-85, Thr-91, Arg-102, and Asn-112 each contribute to the ATP site. His-115 acts as the Pros-phosphohistidine intermediate in catalysis.

Belongs to the NDK family. Homotetramer. It depends on Mg(2+) as a cofactor.

The protein localises to the cytoplasm. It catalyses the reaction a 2'-deoxyribonucleoside 5'-diphosphate + ATP = a 2'-deoxyribonucleoside 5'-triphosphate + ADP. The catalysed reaction is a ribonucleoside 5'-diphosphate + ATP = a ribonucleoside 5'-triphosphate + ADP. In terms of biological role, major role in the synthesis of nucleoside triphosphates other than ATP. The ATP gamma phosphate is transferred to the NDP beta phosphate via a ping-pong mechanism, using a phosphorylated active-site intermediate. The protein is Nucleoside diphosphate kinase of Deinococcus deserti (strain DSM 17065 / CIP 109153 / LMG 22923 / VCD115).